Here is a 548-residue protein sequence, read N- to C-terminus: 4-coumarate--CoA ligase CCL1 (548 aa).

Residues 195–203 (SSGTTGLPK), 337–342 (QGYGMT), D426, 438–441 (IVDR), and K532 each bind ATP. Residues 268–337 (EISKLLELIE…EKLPHAKLGQ (70 aa)) form an SBD1 region. The segment at 338–405 (GYGMTEAGPV…IRGKQIMKGY (68 aa)) is SBD2.

Belongs to the ATP-dependent AMP-binding enzyme family. As to expression, mostly expressed in glandular trichomes (lupulin glands) after flowering, and, to a lower extent, in stems, leaves, cones and flowers.

It localises to the cytoplasm. It catalyses the reaction (E)-4-coumarate + ATP + CoA = (E)-4-coumaroyl-CoA + AMP + diphosphate. The protein operates within secondary metabolite biosynthesis. Functionally, involved in the biosynthesis of prenylated phenolics natural products which contribute to the bitter taste of beer and display broad biological activities. Catalyzes the ligation of CoA on (E)-4-coumarate to produce (E)-4-coumaroyl-CoA. This is 4-coumarate--CoA ligase CCL1 from Humulus lupulus (European hop).